The chain runs to 295 residues: Protoheme IX farnesyltransferase (295 aa).

The next 9 membrane-spanning stretches (helical) occupy residues 27 to 47 (IMYL…GNIH), 48 to 68 (PFIG…AGAI), 93 to 115 (IARS…VMMI), 119 to 136 (YLSG…SLVY), 147 to 167 (NIVI…TSVT), 175 to 195 (LILF…LSLL), 219 to 239 (IYIL…GIFL), 247 to 267 (TCAI…FVSI), and 275 to 295 (MFTY…ISSF).

This sequence belongs to the UbiA prenyltransferase family. Protoheme IX farnesyltransferase subfamily.

The protein localises to the cell inner membrane. The catalysed reaction is heme b + (2E,6E)-farnesyl diphosphate + H2O = Fe(II)-heme o + diphosphate. The protein operates within porphyrin-containing compound metabolism; heme O biosynthesis; heme O from protoheme: step 1/1. Its function is as follows. Converts heme B (protoheme IX) to heme O by substitution of the vinyl group on carbon 2 of heme B porphyrin ring with a hydroxyethyl farnesyl side group. This is Protoheme IX farnesyltransferase from Ehrlichia chaffeensis (strain ATCC CRL-10679 / Arkansas).